Here is a 529-residue protein sequence, read N- to C-terminus: DNA-binding protein (529 aa).

Residues 1–17 (MASREEEQRETTPERGR) are compositionally biased toward basic and acidic residues. Disordered regions lie at residues 1-108 (MASR…VDSE) and 125-168 (PVLI…SEST). Residues 129–139 (KHGKGGKRTVR) are compositionally biased toward basic residues. Residues 140-155 (RLNEDDPVARGMRTQE) show a composition bias toward basic and acidic residues. The segment covering 156 to 165 (EKEESSEAES) has biased composition (acidic residues). A Phosphotyrosine; by host modification is found at Tyr-195. The Zn(2+) site is built by Cys-284 and His-286. The interval 297–331 (IEMDVTSENGQRALKEQSSKAKIVKNRWGRNVVQI) is flexible loop. Zn(2+) contacts are provided by Cys-339, Cys-355, Cys-396, Cys-398, Cys-450, and Cys-467. The C-terminal arm, DBP binding stretch occupies residues 513–529 (VSLPVAHSDARQNPFDF).

The protein belongs to the adenoviridae E2A DNA-binding protein family. In terms of assembly, homomultimerizes on viral ssDNA bound to pTP. Forms an initiation complex with viral polymerase, pTP and hosts NFIA and POU2F1/OCT1. Interacts with host SRCAP.

Its subcellular location is the host nucleus. Plays a role in the elongation phase of viral strand displacement replication by unwinding the template in an ATP-independent fashion, employing its capacity to form multimers. Also enhances the rate of initiation. Released from template upon second strand synthesis. Assembles in complex with viral pTP, viral pol, host NFIA and host POU2F1/OCT1 on viral origin of replication. Covers the whole ssDNA genome during synthesis. The complementary strand synthesis induces its release from DNA template. May inhibit cellular transcription mediated by the interaction between host SRCAP and CBP. This chain is DNA-binding protein, found in Human adenovirus C serotype 2 (HAdV-2).